Here is a 259-residue protein sequence, read N- to C-terminus: Hydroxyethylthiazole kinase (259 aa).

Met-50 provides a ligand contact to substrate. The ATP site is built by Arg-122 and Thr-168. Position 195 (Gly-195) interacts with substrate.

It belongs to the Thz kinase family. Requires Mg(2+) as cofactor.

The enzyme catalyses 5-(2-hydroxyethyl)-4-methylthiazole + ATP = 4-methyl-5-(2-phosphooxyethyl)-thiazole + ADP + H(+). It participates in cofactor biosynthesis; thiamine diphosphate biosynthesis; 4-methyl-5-(2-phosphoethyl)-thiazole from 5-(2-hydroxyethyl)-4-methylthiazole: step 1/1. Functionally, catalyzes the phosphorylation of the hydroxyl group of 4-methyl-5-beta-hydroxyethylthiazole (THZ). In Escherichia coli O127:H6 (strain E2348/69 / EPEC), this protein is Hydroxyethylthiazole kinase.